Reading from the N-terminus, the 370-residue chain is Flagellar P-ring protein (370 aa).

Positions 1 to 28 are cleaved as a signal peptide; that stretch reads MTFFTRCFRRGALLFLLAVLLLPSPAQA.

Belongs to the FlgI family. In terms of assembly, the basal body constitutes a major portion of the flagellar organelle and consists of four rings (L,P,S, and M) mounted on a central rod.

Its subcellular location is the periplasm. The protein resides in the bacterial flagellum basal body. Assembles around the rod to form the L-ring and probably protects the motor/basal body from shearing forces during rotation. This Oleidesulfovibrio alaskensis (strain ATCC BAA-1058 / DSM 17464 / G20) (Desulfovibrio alaskensis) protein is Flagellar P-ring protein.